The chain runs to 635 residues: 1-deoxy-D-xylulose-5-phosphate synthase (635 aa).

Residues histidine 76 and 117–119 contribute to the thiamine diphosphate site; that span reads GHS. Aspartate 148 contacts Mg(2+). Thiamine diphosphate is bound by residues 149–150, asparagine 177, tyrosine 294, and glutamate 379; that span reads GA. Asparagine 177 contributes to the Mg(2+) binding site.

This sequence belongs to the transketolase family. DXPS subfamily. Homodimer. The cofactor is Mg(2+). Thiamine diphosphate serves as cofactor.

The catalysed reaction is D-glyceraldehyde 3-phosphate + pyruvate + H(+) = 1-deoxy-D-xylulose 5-phosphate + CO2. It participates in metabolic intermediate biosynthesis; 1-deoxy-D-xylulose 5-phosphate biosynthesis; 1-deoxy-D-xylulose 5-phosphate from D-glyceraldehyde 3-phosphate and pyruvate: step 1/1. Its function is as follows. Catalyzes the acyloin condensation reaction between C atoms 2 and 3 of pyruvate and glyceraldehyde 3-phosphate to yield 1-deoxy-D-xylulose-5-phosphate (DXP). The polypeptide is 1-deoxy-D-xylulose-5-phosphate synthase (Neisseria meningitidis serogroup C (strain 053442)).